We begin with the raw amino-acid sequence, 143 residues long: uncharacterized protein (143 aa).

The chain crosses the membrane as a helical span at residues 4-24 (FGIVALSIICSIAFLFVAYGV). Residues 97-143 (TVPFVNTEAPPPRLSSSFSRQSGENAETQSQVSASPFNDKNSPYVQE) are disordered. A compositionally biased stretch (polar residues) spans 110-143 (LSSSFSRQSGENAETQSQVSASPFNDKNSPYVQE).

It localises to the golgi apparatus membrane. This is an uncharacterized protein from Schizosaccharomyces pombe (strain 972 / ATCC 24843) (Fission yeast).